The following is a 198-amino-acid chain: Adenylate kinase (198 aa).

10-15 (GAGKGT) contacts ATP. Positions 30–59 (STGDMLRAAVQAGSEVGKRAKAVMDAGELV) are NMP. AMP-binding positions include T31, R36, 57–59 (ELV), 85–88 (GYPR), and Q92. The interval 126–142 (KRAEDAKAAGQPVRKDD) is LID. R127 contributes to the ATP binding site. The AMP site is built by R139 and R150. Residue A178 coordinates ATP.

This sequence belongs to the adenylate kinase family. Monomer.

The protein localises to the cytoplasm. It carries out the reaction AMP + ATP = 2 ADP. It functions in the pathway purine metabolism; AMP biosynthesis via salvage pathway; AMP from ADP: step 1/1. Catalyzes the reversible transfer of the terminal phosphate group between ATP and AMP. Plays an important role in cellular energy homeostasis and in adenine nucleotide metabolism. The chain is Adenylate kinase from Mesorhizobium japonicum (strain LMG 29417 / CECT 9101 / MAFF 303099) (Mesorhizobium loti (strain MAFF 303099)).